The chain runs to 23 residues: Magainin-R1 (23 aa).

As to expression, expressed by the skin glands.

It localises to the secreted. Functionally, antimicrobial peptide. The polypeptide is Magainin-R1 (Xenopus ruwenzoriensis (Uganda clawed frog)).